We begin with the raw amino-acid sequence, 308 residues long: Mitochondrial import receptor subunit TOM40B (308 aa).

The required for mitochondrial targeting stretch occupies residues 281-308 (PLPVTLALGAFLNHWRNRFHCGFSITVG).

This sequence belongs to the Tom40 family. As to quaternary structure, forms part of the preprotein translocase of the outer mitochondrial membrane (TOM complex) containing TOMM22, TOMM40, TOMM40L and TOMM70. Interacts with mitochondrial targeting sequences. In terms of tissue distribution, widely expressed. Higher levels in heart, brain and liver, very low level in testis.

Its subcellular location is the mitochondrion outer membrane. Functionally, potential channel-forming protein implicated in import of protein precursors into mitochondria. The sequence is that of Mitochondrial import receptor subunit TOM40B from Rattus norvegicus (Rat).